A 240-amino-acid polypeptide reads, in one-letter code: Uridylate kinase (240 aa).

13–16 lines the ATP pocket; the sequence is KASG. G55 serves as a coordination point for UMP. Positions 56 and 60 each coordinate ATP. UMP contacts are provided by residues D75 and 136–143; that span reads TGNPFFTT. Residues T163, Q164, Y169, and D172 each coordinate ATP.

Belongs to the UMP kinase family. In terms of assembly, homohexamer.

Its subcellular location is the cytoplasm. The catalysed reaction is UMP + ATP = UDP + ADP. It functions in the pathway pyrimidine metabolism; CTP biosynthesis via de novo pathway; UDP from UMP (UMPK route): step 1/1. Its activity is regulated as follows. Inhibited by UTP. Its function is as follows. Catalyzes the reversible phosphorylation of UMP to UDP. This chain is Uridylate kinase, found in Mesorhizobium japonicum (strain LMG 29417 / CECT 9101 / MAFF 303099) (Mesorhizobium loti (strain MAFF 303099)).